The primary structure comprises 156 residues: Large ribosomal subunit protein uL22 (156 aa).

It belongs to the universal ribosomal protein uL22 family. In terms of assembly, part of the 50S ribosomal subunit.

Its function is as follows. This protein binds specifically to 23S rRNA. It makes multiple contacts with different domains of the 23S rRNA in the assembled 50S subunit and ribosome. The globular domain of the protein is located near the polypeptide exit tunnel on the outside of the subunit, while an extended beta-hairpin is found that lines the wall of the exit tunnel in the center of the 70S ribosome. This Sulfolobus acidocaldarius (strain ATCC 33909 / DSM 639 / JCM 8929 / NBRC 15157 / NCIMB 11770) protein is Large ribosomal subunit protein uL22.